The primary structure comprises 172 residues: uncharacterized protein (172 aa).

The first 22 residues, 1-22, serve as a signal peptide directing secretion; the sequence is MKLFQLLLLVLTISSFIISNNG. The Extracellular segment spans residues 23-140; the sequence is LVESHQGRMH…FSYENSSNET (118 aa). The disordered stretch occupies residues 27–69; the sequence is HQGRMHRGSGERHHRAGGNQQQPQPPSEQQVESSYNSNDDGSS. Over residues 29 to 42 the composition is skewed to basic residues; it reads GRMHRGSGERHHRA. The segment covering 53–69 has biased composition (low complexity); it reads SEQQVESSYNSNDDGSS. 2 N-linked (GlcNAc...) asparagine glycosylation sites follow: N135 and N138. Residues 141 to 161 form a helical membrane-spanning segment; the sequence is IVIYINPVTLVFTLVLLLTFI. Topologically, residues 162-172 are cytoplasmic; that stretch reads VLTITQSLRKY.

The protein resides in the membrane. This is an uncharacterized protein from Dictyostelium discoideum (Social amoeba).